A 194-amino-acid polypeptide reads, in one-letter code: Peptidyl-tRNA hydrolase (194 aa).

Position 17 (Tyr17) interacts with tRNA. His22 functions as the Proton acceptor in the catalytic mechanism. TRNA-binding residues include Tyr69, Asn71, and Asn117.

It belongs to the PTH family. In terms of assembly, monomer.

Its subcellular location is the cytoplasm. It carries out the reaction an N-acyl-L-alpha-aminoacyl-tRNA + H2O = an N-acyl-L-amino acid + a tRNA + H(+). Functionally, hydrolyzes ribosome-free peptidyl-tRNAs (with 1 or more amino acids incorporated), which drop off the ribosome during protein synthesis, or as a result of ribosome stalling. Catalyzes the release of premature peptidyl moieties from peptidyl-tRNA molecules trapped in stalled 50S ribosomal subunits, and thus maintains levels of free tRNAs and 50S ribosomes. The sequence is that of Peptidyl-tRNA hydrolase from Arthrobacter sp. (strain FB24).